A 702-amino-acid polypeptide reads, in one-letter code: Polyribonucleotide nucleotidyltransferase (702 aa).

Residues Asp485 and Asp491 each contribute to the Mg(2+) site. The KH domain occupies Pro552–Ile612. The 69-residue stretch at Gly622 to Lys690 folds into the S1 motif domain.

Belongs to the polyribonucleotide nucleotidyltransferase family. Requires Mg(2+) as cofactor.

The protein resides in the cytoplasm. The catalysed reaction is RNA(n+1) + phosphate = RNA(n) + a ribonucleoside 5'-diphosphate. In terms of biological role, involved in mRNA degradation. Catalyzes the phosphorolysis of single-stranded polyribonucleotides processively in the 3'- to 5'-direction. The chain is Polyribonucleotide nucleotidyltransferase from Clostridium botulinum (strain Kyoto / Type A2).